Here is a 215-residue protein sequence, read N- to C-terminus: Peptide methionine sulfoxide reductase MsrA (215 aa).

Cys-58 is an active-site residue.

The protein belongs to the MsrA Met sulfoxide reductase family.

It carries out the reaction L-methionyl-[protein] + [thioredoxin]-disulfide + H2O = L-methionyl-(S)-S-oxide-[protein] + [thioredoxin]-dithiol. The enzyme catalyses [thioredoxin]-disulfide + L-methionine + H2O = L-methionine (S)-S-oxide + [thioredoxin]-dithiol. Has an important function as a repair enzyme for proteins that have been inactivated by oxidation. Catalyzes the reversible oxidation-reduction of methionine sulfoxide in proteins to methionine. This Pseudomonas aeruginosa (strain LESB58) protein is Peptide methionine sulfoxide reductase MsrA.